The primary structure comprises 162 residues: UPF0114 protein Sputw3181_3501 (162 aa).

The next 3 membrane-spanning stretches (helical) occupy residues 15–35 (IMAP…IKFF), 53–73 (LVLV…IVMV), and 136–156 (IMWY…MGYL).

This sequence belongs to the UPF0114 family.

It is found in the cell membrane. This chain is UPF0114 protein Sputw3181_3501, found in Shewanella sp. (strain W3-18-1).